Here is a 430-residue protein sequence, read N- to C-terminus: MGKNVVVLGTQWGDEGKGKIVDLLTEHAAAVVRYQGGHNAGHTLVINGEKTVLHLIPSGILREGVQCLIGNGVVVAPDALMREITKLEEKGVPVRERLRISPAAPLILSYHVALDQAREKARGEAKIGTTGRGIGPAYEDKVARRGLRVGDLFHRERFAAKLGELLDYHNFQLVNYYKEPAIDFQQTLDECMAYAEQLKPMMLDVTAELHNLRRAGKDIMFEGAQGSLLDIDHGTYPYVTSSNTTAGGISTGSGVGPMYLDYILGITKAYTTRVGSGPFPTELFDETGATLAKRGHEFGSTTGRARRCGWFDAVILRRAIDVNSISGICLTKLDVLDGLETINICVGYKNENGAVIDAPSDADSYIGLEPVYEEMPGWSESTLGVKTLEELPQAARDYIKRIEELVGAPIDIISTGPDRNETIVLRHPFA.

Residues 13–19 (GDEGKGK) and 41–43 (GHT) contribute to the GTP site. Catalysis depends on Asp14, which acts as the Proton acceptor. Asp14 and Gly41 together coordinate Mg(2+). IMP contacts are provided by residues 14 to 17 (DEGK), 39 to 42 (NAGH), Thr130, Arg144, Gln225, Thr240, and Arg304. His42 (proton donor) is an active-site residue. 300–306 (STTGRAR) provides a ligand contact to substrate. GTP is bound by residues Arg306, 332–334 (KLD), and 414–416 (STG).

It belongs to the adenylosuccinate synthetase family. As to quaternary structure, homodimer. Mg(2+) serves as cofactor.

The protein localises to the cytoplasm. The catalysed reaction is IMP + L-aspartate + GTP = N(6)-(1,2-dicarboxyethyl)-AMP + GDP + phosphate + 2 H(+). Its pathway is purine metabolism; AMP biosynthesis via de novo pathway; AMP from IMP: step 1/2. Its function is as follows. Plays an important role in the de novo pathway of purine nucleotide biosynthesis. Catalyzes the first committed step in the biosynthesis of AMP from IMP. The protein is Adenylosuccinate synthetase of Pseudomonas putida (strain ATCC 700007 / DSM 6899 / JCM 31910 / BCRC 17059 / LMG 24140 / F1).